The primary structure comprises 906 residues: Protein translocase subunit SecA (906 aa).

Residues Gln89, 107–111 (GEGKT), and Asp502 each bind ATP. Zn(2+) contacts are provided by Cys890, Cys892, Cys901, and His902.

Belongs to the SecA family. In terms of assembly, monomer and homodimer. Part of the essential Sec protein translocation apparatus which comprises SecA, SecYEG and auxiliary proteins SecDF-YajC and YidC. Zn(2+) is required as a cofactor.

The protein localises to the cell inner membrane. It localises to the cytoplasm. It catalyses the reaction ATP + H2O + cellular proteinSide 1 = ADP + phosphate + cellular proteinSide 2.. Part of the Sec protein translocase complex. Interacts with the SecYEG preprotein conducting channel. Has a central role in coupling the hydrolysis of ATP to the transfer of proteins into and across the cell membrane, serving both as a receptor for the preprotein-SecB complex and as an ATP-driven molecular motor driving the stepwise translocation of polypeptide chains across the membrane. This is Protein translocase subunit SecA from Bartonella quintana (strain Toulouse) (Rochalimaea quintana).